The chain runs to 406 residues: Argininosuccinate synthase (406 aa).

ATP is bound by residues 14–22 and A41; that span reads AYSGGLDTS. Residues Y92 and S97 each coordinate L-citrulline. An ATP-binding site is contributed by G122. Residues T124, N128, and D129 each coordinate L-aspartate. N128 is a binding site for L-citrulline. L-citrulline-binding residues include R132, S181, S190, E266, and Y278.

It belongs to the argininosuccinate synthase family. Type 1 subfamily. As to quaternary structure, homotetramer.

It localises to the cytoplasm. It catalyses the reaction L-citrulline + L-aspartate + ATP = 2-(N(omega)-L-arginino)succinate + AMP + diphosphate + H(+). Its pathway is amino-acid biosynthesis; L-arginine biosynthesis; L-arginine from L-ornithine and carbamoyl phosphate: step 2/3. In Geobacter metallireducens (strain ATCC 53774 / DSM 7210 / GS-15), this protein is Argininosuccinate synthase.